The chain runs to 51 residues: Putative inactivation escape 1 protein (51 aa).

As to expression, highly expressed in pancreas, heart and liver followed by brain, placenta, lung, skeletal muscle and kidney. Mostly expressed in females.

This Homo sapiens (Human) protein is Putative inactivation escape 1 protein (INE1).